A 374-amino-acid chain; its full sequence is Patatin-2-Kuras 1 (374 aa).

A signal peptide spans 1–11 (MILATTGSTCA). One can recognise a PNPLA domain in the interval 20–217 (LSIDGGGIKG…TVGDPALLSL (198 aa)). The GXGXXG motif lies at 24–29 (GGGIKG). The GXSXG motif lies at 63–67 (GTSTG). Catalysis depends on serine 65, which acts as the Nucleophile. An N-linked (GlcNAc...) asparagine glycan is attached at asparagine 103. The active-site Proton acceptor is the aspartate 203. The DGA/G signature appears at 203 to 205 (DGA). Residues 309-372 (ENALTGTTTE…DRKKLRANKA (64 aa)) are a coiled coil.

Belongs to the patatin family. In terms of tissue distribution, tuber.

It localises to the vacuole. Probable lipolytic acyl hydrolase (LAH), an activity which is thought to be involved in the response of tubers to pathogens. The sequence is that of Patatin-2-Kuras 1 (pat2-k1) from Solanum tuberosum (Potato).